Reading from the N-terminus, the 301-residue chain is uncharacterized protein (301 aa).

Catalysis depends on charge relay system residues Ser-44 and Tyr-107. The active-site Proton donor is the Tyr-133. Lys-162 functions as the Schiff-base intermediate with substrate in the catalytic mechanism.

Belongs to the DapA family. Homotetramer.

It localises to the cytoplasm. This is an uncharacterized protein from Pyrobaculum neutrophilum (strain DSM 2338 / JCM 9278 / NBRC 100436 / V24Sta) (Thermoproteus neutrophilus).